The following is a 348-amino-acid chain: Protein RecA (348 aa).

Position 66 to 73 (66 to 73 (GPESSGKT)) interacts with ATP.

The protein belongs to the RecA family.

The protein resides in the cytoplasm. Functionally, can catalyze the hydrolysis of ATP in the presence of single-stranded DNA, the ATP-dependent uptake of single-stranded DNA by duplex DNA, and the ATP-dependent hybridization of homologous single-stranded DNAs. It interacts with LexA causing its activation and leading to its autocatalytic cleavage. The sequence is that of Protein RecA from Neisseria gonorrhoeae (strain NCCP11945).